A 353-amino-acid polypeptide reads, in one-letter code: Alcohol dehydrogenase 1 (353 aa).

Zn(2+)-binding residues include C47, H70, C101, C104, C107, C115, and C157. NAD(+) contacts are provided by residues 181-187, D205, K210, 274-276, and R346; these read GAGGGLG and IGL.

It belongs to the zinc-containing alcohol dehydrogenase family. In terms of assembly, homotetramer. Zn(2+) serves as cofactor.

The protein localises to the cytoplasm. It catalyses the reaction a primary alcohol + NAD(+) = an aldehyde + NADH + H(+). It carries out the reaction a secondary alcohol + NAD(+) = a ketone + NADH + H(+). The protein is Alcohol dehydrogenase 1 (adh-1) of Neurospora crassa (strain ATCC 24698 / 74-OR23-1A / CBS 708.71 / DSM 1257 / FGSC 987).